We begin with the raw amino-acid sequence, 752 residues long: Granule-bound starch synthase 2, chloroplastic/amyloplastic (752 aa).

A chloroplast-targeting transit peptide spans 1-57 (MMLSLGSDATVLPFHAKNLKFTPKLSTLNGDLAFSKGLGVGRLNCGSVRLNHKQHVR). 2 disordered regions span residues 116–146 (LEGN…SGSA) and 224–253 (FENF…EKPP). An ADP-alpha-D-glucose-binding site is contributed by lysine 275.

It belongs to the glycosyltransferase 1 family. Bacterial/plant glycogen synthase subfamily. In terms of tissue distribution, widely expressed.

Its subcellular location is the plastid. It is found in the chloroplast. It localises to the amyloplast. It catalyses the reaction [(1-&gt;4)-alpha-D-glucosyl](n) + ADP-alpha-D-glucose = [(1-&gt;4)-alpha-D-glucosyl](n+1) + ADP + H(+). Its pathway is glycan biosynthesis; starch biosynthesis. This Pisum sativum (Garden pea) protein is Granule-bound starch synthase 2, chloroplastic/amyloplastic.